We begin with the raw amino-acid sequence, 456 residues long: Cytochrome c biogenesis protein CcsB (456 aa).

3 helical membrane-spanning segments follow: residues 29-49 (LRLA…GTVI), 88-108 (AGWF…CTFR), and 174-194 (VGPI…IWGS).

It belongs to the Ccs1/CcsB family. In terms of assembly, may interact with CcsA.

It is found in the cellular thylakoid membrane. Its function is as follows. Required during biogenesis of c-type cytochromes (cytochrome c6 and cytochrome f) at the step of heme attachment. The chain is Cytochrome c biogenesis protein CcsB from Synechococcus sp. (strain ATCC 27144 / PCC 6301 / SAUG 1402/1) (Anacystis nidulans).